A 131-amino-acid polypeptide reads, in one-letter code: Glycine cleavage system H protein (131 aa).

The Lipoyl-binding domain maps to 24–106 (IATIGISAFA…YGEGWLLKLR (83 aa)). At Lys-65 the chain carries N6-lipoyllysine.

This sequence belongs to the GcvH family. The glycine cleavage system is composed of four proteins: P, T, L and H. The cofactor is (R)-lipoate.

In terms of biological role, the glycine cleavage system catalyzes the degradation of glycine. The H protein shuttles the methylamine group of glycine from the P protein to the T protein. This is Glycine cleavage system H protein from Gloeothece citriformis (strain PCC 7424) (Cyanothece sp. (strain PCC 7424)).